The sequence spans 197 residues: Dephospho-CoA kinase (197 aa).

Residues Ile-3–Pro-197 enclose the DPCK domain. An ATP-binding site is contributed by Ala-11–Thr-16.

Belongs to the CoaE family.

Its subcellular location is the cytoplasm. The enzyme catalyses 3'-dephospho-CoA + ATP = ADP + CoA + H(+). Its pathway is cofactor biosynthesis; coenzyme A biosynthesis; CoA from (R)-pantothenate: step 5/5. Catalyzes the phosphorylation of the 3'-hydroxyl group of dephosphocoenzyme A to form coenzyme A. The polypeptide is Dephospho-CoA kinase (Geobacter sulfurreducens (strain ATCC 51573 / DSM 12127 / PCA)).